The primary structure comprises 203 residues: uncharacterized protein (203 aa).

Positions 117–138 (SSDPKLKQPSNCLNDQTNNDSA) are disordered. Over residues 124–138 (QPSNCLNDQTNNDSA) the composition is skewed to polar residues.

It localises to the cytoplasm. The protein resides in the nucleus. This is an uncharacterized protein from Schizosaccharomyces pombe (strain 972 / ATCC 24843) (Fission yeast).